The sequence spans 581 residues: DNA primase (581 aa).

Residues 40-64 (CPFHNEKTPSFTVNGEKQFYHCFGC) form a CHC2-type zinc finger. The region spanning 259-341 (NRLLVVEGYM…GRQLRFMFLP (83 aa)) is the Toprim domain. E265, D309, and D311 together coordinate Mg(2+).

This sequence belongs to the DnaG primase family. Monomer. Interacts with DnaB. The cofactor is Zn(2+). It depends on Mg(2+) as a cofactor.

It carries out the reaction ssDNA + n NTP = ssDNA/pppN(pN)n-1 hybrid + (n-1) diphosphate.. RNA polymerase that catalyzes the synthesis of short RNA molecules used as primers for DNA polymerase during DNA replication. The polypeptide is DNA primase (Escherichia coli O6:H1 (strain CFT073 / ATCC 700928 / UPEC)).